Consider the following 232-residue polypeptide: Triosephosphate isomerase (232 aa).

Residue 6–8 coordinates substrate; sequence NFK. His-86 serves as the catalytic Electrophile. Glu-155 (proton acceptor) is an active-site residue. 2 residues coordinate substrate: Gly-161 and Ser-191.

Belongs to the triosephosphate isomerase family. Homodimer.

The protein resides in the cytoplasm. The catalysed reaction is D-glyceraldehyde 3-phosphate = dihydroxyacetone phosphate. It functions in the pathway carbohydrate biosynthesis; gluconeogenesis. The protein operates within carbohydrate degradation; glycolysis; D-glyceraldehyde 3-phosphate from glycerone phosphate: step 1/1. Involved in the gluconeogenesis. Catalyzes stereospecifically the conversion of dihydroxyacetone phosphate (DHAP) to D-glyceraldehyde-3-phosphate (G3P). This is Triosephosphate isomerase from Nitratiruptor sp. (strain SB155-2).